Here is a 205-residue protein sequence, read N- to C-terminus: Methylthioribulose-1-phosphate dehydratase (205 aa).

His98 and His100 together coordinate Zn(2+).

Belongs to the aldolase class II family. MtnB subfamily. The cofactor is Zn(2+).

The enzyme catalyses 5-(methylsulfanyl)-D-ribulose 1-phosphate = 5-methylsulfanyl-2,3-dioxopentyl phosphate + H2O. The protein operates within amino-acid biosynthesis; L-methionine biosynthesis via salvage pathway; L-methionine from S-methyl-5-thio-alpha-D-ribose 1-phosphate: step 2/6. Functionally, catalyzes the dehydration of methylthioribulose-1-phosphate (MTRu-1-P) into 2,3-diketo-5-methylthiopentyl-1-phosphate (DK-MTP-1-P). This chain is Methylthioribulose-1-phosphate dehydratase, found in Gluconacetobacter diazotrophicus (strain ATCC 49037 / DSM 5601 / CCUG 37298 / CIP 103539 / LMG 7603 / PAl5).